The chain runs to 414 residues: Probable serine/threonine-protein kinase PBL26 (414 aa).

C3 is lipidated: S-palmitoyl cysteine. A compositionally biased stretch (basic and acidic residues) spans 17–41; the sequence is RDSDNSYRRNGEVTGRDNNKTHPEN. Residues 17 to 55 form a disordered region; that stretch reads RDSDNSYRRNGEVTGRDNNKTHPENPKTVNEQNKNNDED. Residues 79–356 enclose the Protein kinase domain; it reads FRQECLIGEG…SDVVTALGFL (278 aa). Residues 85-93 and K108 each bind ATP; that span reads IGEGGFGRV. Y153 is modified (phosphotyrosine). The Proton acceptor role is filled by D206. S240 carries the phosphoserine modification. Position 246 is a phosphothreonine (T246). Y254 is subject to Phosphotyrosine. Positions 364–394 are disordered; it reads ISVPHYDDPPQPSDETSVEDSVAAEERERAV.

It belongs to the protein kinase superfamily. Ser/Thr protein kinase family. Palmitoylation at Cys-3 and Cys-6 are required for plasma membrane location.

It localises to the cell membrane. It carries out the reaction L-seryl-[protein] + ATP = O-phospho-L-seryl-[protein] + ADP + H(+). The enzyme catalyses L-threonyl-[protein] + ATP = O-phospho-L-threonyl-[protein] + ADP + H(+). In terms of biological role, may be involved in plant defense signaling. The sequence is that of Probable serine/threonine-protein kinase PBL26 from Arabidopsis thaliana (Mouse-ear cress).